An 89-amino-acid polypeptide reads, in one-letter code: Small ribosomal subunit protein uS15 (89 aa).

It belongs to the universal ribosomal protein uS15 family. As to quaternary structure, part of the 30S ribosomal subunit. Forms a bridge to the 50S subunit in the 70S ribosome, contacting the 23S rRNA.

In terms of biological role, one of the primary rRNA binding proteins, it binds directly to 16S rRNA where it helps nucleate assembly of the platform of the 30S subunit by binding and bridging several RNA helices of the 16S rRNA. Its function is as follows. Forms an intersubunit bridge (bridge B4) with the 23S rRNA of the 50S subunit in the ribosome. This chain is Small ribosomal subunit protein uS15, found in Corynebacterium urealyticum (strain ATCC 43042 / DSM 7109).